Here is a 94-residue protein sequence, read N- to C-terminus: Large ribosomal subunit protein eL33 (94 aa).

The protein belongs to the eukaryotic ribosomal protein eL33 family.

In Aeropyrum pernix (strain ATCC 700893 / DSM 11879 / JCM 9820 / NBRC 100138 / K1), this protein is Large ribosomal subunit protein eL33.